A 334-amino-acid chain; its full sequence is Ketol-acid reductoisomerase (NADP(+)) (334 aa).

The region spanning 1–181 is the KARI N-terminal Rossmann domain; sequence MTTVYYDQDV…GATRAGVIET (181 aa). NADP(+) is bound by residues 25–28, arginine 48, serine 52, and 82–85; these read YGSQ and DEIQ. Histidine 107 is an active-site residue. Glycine 133 provides a ligand contact to NADP(+). The KARI C-terminal knotted domain occupies 182-327; it reads TFKEETETDL…RELREMMPFI (146 aa). The Mg(2+) site is built by aspartate 190, glutamate 194, glutamate 226, and glutamate 230. Position 251 (serine 251) interacts with substrate.

This sequence belongs to the ketol-acid reductoisomerase family. Requires Mg(2+) as cofactor.

It catalyses the reaction (2R)-2,3-dihydroxy-3-methylbutanoate + NADP(+) = (2S)-2-acetolactate + NADPH + H(+). The catalysed reaction is (2R,3R)-2,3-dihydroxy-3-methylpentanoate + NADP(+) = (S)-2-ethyl-2-hydroxy-3-oxobutanoate + NADPH + H(+). The protein operates within amino-acid biosynthesis; L-isoleucine biosynthesis; L-isoleucine from 2-oxobutanoate: step 2/4. It functions in the pathway amino-acid biosynthesis; L-valine biosynthesis; L-valine from pyruvate: step 2/4. In terms of biological role, involved in the biosynthesis of branched-chain amino acids (BCAA). Catalyzes an alkyl-migration followed by a ketol-acid reduction of (S)-2-acetolactate (S2AL) to yield (R)-2,3-dihydroxy-isovalerate. In the isomerase reaction, S2AL is rearranged via a Mg-dependent methyl migration to produce 3-hydroxy-3-methyl-2-ketobutyrate (HMKB). In the reductase reaction, this 2-ketoacid undergoes a metal-dependent reduction by NADPH to yield (R)-2,3-dihydroxy-isovalerate. This chain is Ketol-acid reductoisomerase (NADP(+)), found in Staphylococcus aureus (strain MSSA476).